We begin with the raw amino-acid sequence, 262 residues long: Phosphate import ATP-binding protein PstB (262 aa).

Positions 15 to 257 (AKASNLNLWY…PQKSKTEQYI (243 aa)) constitute an ABC transporter domain. 47–54 (GPSGCGKS) serves as a coordination point for ATP.

It belongs to the ABC transporter superfamily. Phosphate importer (TC 3.A.1.7) family. As to quaternary structure, the complex is composed of two ATP-binding proteins (PstB), two transmembrane proteins (PstC and PstA) and a solute-binding protein (PstS).

The protein localises to the cell inner membrane. The enzyme catalyses phosphate(out) + ATP + H2O = ADP + 2 phosphate(in) + H(+). Part of the ABC transporter complex PstSACB involved in phosphate import. Responsible for energy coupling to the transport system. The sequence is that of Phosphate import ATP-binding protein PstB from Wolinella succinogenes (strain ATCC 29543 / DSM 1740 / CCUG 13145 / JCM 31913 / LMG 7466 / NCTC 11488 / FDC 602W) (Vibrio succinogenes).